A 946-amino-acid polypeptide reads, in one-letter code: Bifunctional glutamine synthetase adenylyltransferase/adenylyl-removing enzyme (946 aa).

Residues 1 to 440 (MKPLSSPLQQ…VFNELIGDDE (440 aa)) are adenylyl removase. The tract at residues 449–946 (SEQWRELWQD…ASWQKWLVEE (498 aa)) is adenylyl transferase.

The protein belongs to the GlnE family. The cofactor is Mg(2+).

The catalysed reaction is [glutamine synthetase]-O(4)-(5'-adenylyl)-L-tyrosine + phosphate = [glutamine synthetase]-L-tyrosine + ADP. It catalyses the reaction [glutamine synthetase]-L-tyrosine + ATP = [glutamine synthetase]-O(4)-(5'-adenylyl)-L-tyrosine + diphosphate. Its function is as follows. Involved in the regulation of glutamine synthetase GlnA, a key enzyme in the process to assimilate ammonia. When cellular nitrogen levels are high, the C-terminal adenylyl transferase (AT) inactivates GlnA by covalent transfer of an adenylyl group from ATP to specific tyrosine residue of GlnA, thus reducing its activity. Conversely, when nitrogen levels are low, the N-terminal adenylyl removase (AR) activates GlnA by removing the adenylyl group by phosphorolysis, increasing its activity. The regulatory region of GlnE binds the signal transduction protein PII (GlnB) which indicates the nitrogen status of the cell. This chain is Bifunctional glutamine synthetase adenylyltransferase/adenylyl-removing enzyme, found in Escherichia coli O127:H6 (strain E2348/69 / EPEC).